The following is an 83-amino-acid chain: MSSGGLLLLLGLLTLWEVLTPVSSKDRPNFCHLPHDTGPCKRNTQAFYYNPVYHTCLKFIYSGCEGNANNFKTIDECKRTCAT.

The signal sequence occupies residues 1-24 (MSSGGLLLLLGLLTLWEVLTPVSS). Residues 31–81 (CHLPHDTGPCKRNTQAFYYNPVYHTCLKFIYSGCEGNANNFKTIDECKRTC) form the BPTI/Kunitz inhibitor domain. Disulfide bonds link C31/C81, C40/C64, and C56/C77.

It belongs to the venom Kunitz-type family. As to expression, expressed by the venom gland.

Its subcellular location is the secreted. Functionally, serine protease inhibitor. This is Kunitz-type serine protease inhibitor superbin-4 from Austrelaps superbus (Lowland copperhead snake).